A 377-amino-acid chain; its full sequence is Transcription initiation factor IIA subunit 1 (377 aa).

Ala2 bears the N-acetylalanine mark. Low complexity-rich tracts occupy residues 69–79, 89–105, and 248–280; these read QVQQQHQPQQQ, QAQP…TQQV, and QAQI…TGDT. Disordered stretches follow at residues 69–107 and 248–330; these read QVQQ…QVLI and QAQI…QELF. Phosphoserine; by TAF1 occurs at positions 281 and 282. Positions 281 to 330 are enriched in acidic residues; it reads SSEEDEDEEEDYDDDEEEDKEKDGAEDGQVEEEPLNSEDDVSDEEGQELF. Ser317 and Ser322 each carry phosphoserine. Positions 344 and 345 each coordinate DNA.

It belongs to the TFIIA subunit 1 family. In terms of assembly, TFIIA is a heterodimer of the large unprocessed subunit 1 and a small subunit gamma. It was originally believed to be a heterotrimer of an alpha (p35), a beta (p19) and a gamma subunit (p12). TFIIA forms a complex with TBP. Part of TBP-based Pol II pre-initiation complex (PIC), in which Pol II core assembles with general transcription factors and other specific initiation factors including GTF2E1, GTF2E2, GTF2F1, GTF2F2, TCEA1, ERCC2, ERCC3, GTF2H2, GTF2H3, GTF2H4, GTF2H5, GTF2A1, GTF2A2, GTF2B and TBP; this large multi-subunit PIC complex mediates DNA unwinding and targets Pol II core to the transcription start site where the first phosphodiester bond forms. The alpha and beta subunits are postranslationally produced from the precursor formby TASP1. The cleavage promotes proteasomal degradation.

It localises to the nucleus. Functionally, TFIIA is a component of the transcription machinery of RNA polymerase II and plays an important role in transcriptional activation. TFIIA in a complex with TBP mediates transcriptional activity. This Rattus norvegicus (Rat) protein is Transcription initiation factor IIA subunit 1 (Gtf2a1).